Reading from the N-terminus, the 475-residue chain is FAD-dependent monooxygenase sdgC (475 aa).

Positions 1–23 (MDKRSFKVIVVGGSIAGLTLAHS) are cleaved as a signal peptide. The FAD site is built by Glu-35, Gly-49, and Arg-126. Asn-236 carries N-linked (GlcNAc...) asparagine glycosylation. Ala-330 lines the FAD pocket. Residues 446-466 (ISGVLLLVIPIIALVYGYSVI) traverse the membrane as a helical segment.

Belongs to the paxM FAD-dependent monooxygenase family. The cofactor is FAD.

The protein localises to the membrane. It participates in secondary metabolite biosynthesis. FAD-dependent monooxygenase; part of the gene cluster that mediates the biosynthesis of the polyenes aspernidgulenes. The carbon backbone of aspernidgulenes is synthesized by the HR-PKS sdgA, which accepts acetyl-CoA as the starter unit and performs malonyl-CoA extensions as well as regioselective methylation and reduction. The resulting nonaketide offloads the HR-PKS by intramolecular lactonization to yield the 5,6-dihydro-alpha-pyrone-containing hexaenoic acids preaspernidgulene A1 and A2. The FAD-dependent monooxygenase sdgC then installs the first epoxide on the penultimate double bond. Subsequently, the FAD-dependent monooxygenase sdgF presumably generates a ketone intermediate through Meinwald rearrangement involving a hydride shift. Next, sdgC introduces another epoxide on the last olefin of the ketone intermediate after E/Z isomerization. The epoxide hydrolase sdgD then catalyzes stereospecific cyclization of the 5,6-dihydro-alpha-pyrone and opening of the epoxide ring to form an oxygenated trimethylcyclopentanone and an oxabicyclo[2.2.1]heptane unit. Finally, the bicyclic unit undergoes hydrolytic cleavage, either spontaneously or catalyzed by sdgD, to assemble the dimethyl-gamma-lactone moiety in aspernidgulene A1. This chain is FAD-dependent monooxygenase sdgC, found in Emericella nidulans (strain FGSC A4 / ATCC 38163 / CBS 112.46 / NRRL 194 / M139) (Aspergillus nidulans).